Here is a 312-residue protein sequence, read N- to C-terminus: MEIIFYHPTFNAAWWVNALEKALPHARVREWKVGDNNPADYALVWQPPVEMLAGRRLKAVFALGAGVDAILSKLNAHPEMLDASIPLFRLEDTGMGLQMQEYAVSQVLHWFRRFDDYQALKNQALWKPLPEYTREEFSVGIMGAGVLGAKVAESLQAWGFPLRCWSRSRKSWPGVESYVGREELHAFLNQTRVLINLLPNTAQTVGIINSELLDQLPDGAYVLNLARGVHVQEADLLAALDSGKLKGAMLDVFSQEPLPQESPLWRHPRVAMTPHIAAVTRPAEAIDYISRTIAQLEKGESVTGQVDRARGY.

Arg227 is a catalytic residue. His275 acts as the Proton donor in catalysis.

The protein belongs to the D-isomer specific 2-hydroxyacid dehydrogenase family. GhrA subfamily.

It is found in the cytoplasm. It catalyses the reaction glycolate + NADP(+) = glyoxylate + NADPH + H(+). The catalysed reaction is (R)-glycerate + NAD(+) = 3-hydroxypyruvate + NADH + H(+). It carries out the reaction (R)-glycerate + NADP(+) = 3-hydroxypyruvate + NADPH + H(+). Catalyzes the NADPH-dependent reduction of glyoxylate and hydroxypyruvate into glycolate and glycerate, respectively. The protein is Glyoxylate/hydroxypyruvate reductase A of Salmonella paratyphi B (strain ATCC BAA-1250 / SPB7).